A 453-amino-acid chain; its full sequence is o-phthalyl amidase (453 aa).

As to quaternary structure, monomer. Post-translationally, the N-terminus is blocked.

The catalysed reaction is a phtalamide + H2O = phthalate + a primary amine. Its activity is regulated as follows. Inhibited by iodoacetate, p-hydroxymercuric benzoate and copper ions. Functionally, catalyzes the removal of the phthalyl group from phthalyl amides generating phthalate and an amine. The enzyme has a broad substrate specificity and hydrolyzes phthalylated amino acids, peptides, beta-lactams, aromatic and aliphatic amines; substitutions allowed on the phthalyl group include 6-F, 6-NH(2), 3-OH, and a nitrogen in the aromatic ring ortho to the carboxy group attached to the amine. The sequence is that of o-phthalyl amidase from Xanthobacter agilis.